Reading from the N-terminus, the 317-residue chain is Acetyl-coenzyme A carboxylase carboxyl transferase subunit alpha (317 aa).

In terms of domain architecture, CoA carboxyltransferase C-terminal spans 33–294 (NLDDEIARLQ…KQRLLEDLAD (262 aa)).

It belongs to the AccA family. As to quaternary structure, acetyl-CoA carboxylase is a heterohexamer composed of biotin carboxyl carrier protein (AccB), biotin carboxylase (AccC) and two subunits each of ACCase subunit alpha (AccA) and ACCase subunit beta (AccD).

The protein localises to the cytoplasm. The enzyme catalyses N(6)-carboxybiotinyl-L-lysyl-[protein] + acetyl-CoA = N(6)-biotinyl-L-lysyl-[protein] + malonyl-CoA. It participates in lipid metabolism; malonyl-CoA biosynthesis; malonyl-CoA from acetyl-CoA: step 1/1. Functionally, component of the acetyl coenzyme A carboxylase (ACC) complex. First, biotin carboxylase catalyzes the carboxylation of biotin on its carrier protein (BCCP) and then the CO(2) group is transferred by the carboxyltransferase to acetyl-CoA to form malonyl-CoA. This is Acetyl-coenzyme A carboxylase carboxyl transferase subunit alpha from Glaesserella parasuis serovar 5 (strain SH0165) (Haemophilus parasuis).